A 199-amino-acid polypeptide reads, in one-letter code: NAD(P)H dehydrogenase (quinone) (199 aa).

The Flavodoxin-like domain occupies 4–190 (MLVLYYSAYG…DDARFQGRRV (187 aa)). FMN contacts are provided by residues 10-15 (SAYGHM) and 78-80 (TRY). Tyrosine 12 contacts NAD(+). Residue tryptophan 98 participates in substrate binding. Residues 113–119 (STATQHG) and histidine 134 each bind FMN. Residues 158-181 (GAPYGMTTTADGDGSRQPSAQELD) are disordered. A compositionally biased stretch (polar residues) spans 163–177 (MTTTADGDGSRQPSA).

Belongs to the WrbA family. The cofactor is FMN.

The enzyme catalyses a quinone + NADH + H(+) = a quinol + NAD(+). It catalyses the reaction a quinone + NADPH + H(+) = a quinol + NADP(+). This chain is NAD(P)H dehydrogenase (quinone), found in Brucella ovis (strain ATCC 25840 / 63/290 / NCTC 10512).